The sequence spans 108 residues: Glutaredoxin 4 (108 aa).

The Glutaredoxin domain occupies 5 to 107; sequence IKKIQNQIQN…KTISICDKLN (103 aa). K22 contributes to the glutathione binding site. A [2Fe-2S] cluster-binding site is contributed by C30. Residues R59, F71, and 84–85 each bind glutathione; that span reads CN.

This sequence belongs to the glutaredoxin family. Monothiol subfamily. As to quaternary structure, homodimer.

The protein localises to the cytoplasm. Monothiol glutaredoxin involved in the biogenesis of iron-sulfur clusters. The protein is Glutaredoxin 4 (grxD) of Buchnera aphidicola subsp. Baizongia pistaciae (strain Bp).